The following is a 325-amino-acid chain: Ubiquitin thioesterase OTU1 (325 aa).

Positions 7 to 86 (RIRSKTGVEN…NVSSISSNPG (80 aa)) are UBX-like. The OTU domain occupies 123–246 (ATRRVTDDDN…GIHYDALSIC (124 aa)). A cys-loop region spans residues 128–134 (TDDDNSC). Asp-131 is a catalytic residue. The active-site Nucleophile is the Cys-134. A variable-loop region spans residues 185-195 (IQNPKNWGGAI). The his-loop stretch occupies residues 235–239 (YDGIH). Ile-238 is a binding site for substrate. Residue His-239 is part of the active site. Positions 265 to 270 (KDSLAK) are S2 site. Residues 292–316 (LICLNCNKTLKGEKEAAIHASTTGH) form a C2H2-type zinc finger. The active site involves His-316.

The protein resides in the cytoplasm. The enzyme catalyses Thiol-dependent hydrolysis of ester, thioester, amide, peptide and isopeptide bonds formed by the C-terminal Gly of ubiquitin (a 76-residue protein attached to proteins as an intracellular targeting signal).. Its function is as follows. Hydrolase that can remove conjugated ubiquitin from proteins and may therefore play an important regulatory role at the level of protein turnover by preventing degradation. This is Ubiquitin thioesterase OTU1 (yod1) from Dictyostelium discoideum (Social amoeba).